A 134-amino-acid polypeptide reads, in one-letter code: Arsenate reductase 1 (134 aa).

Catalysis depends on nucleophile residues cysteine 11, cysteine 83, and cysteine 90. 2 disulfides stabilise this stretch: cysteine 11–cysteine 83 and cysteine 83–cysteine 90.

It belongs to the low molecular weight phosphotyrosine protein phosphatase family. Thioredoxin-coupled ArsC subfamily.

It is found in the cytoplasm. It carries out the reaction arsenate + [thioredoxin]-dithiol + H(+) = arsenite + [thioredoxin]-disulfide + H2O. Its function is as follows. Catalyzes the reduction of arsenate [As(V)] to arsenite [As(III)]. The chain is Arsenate reductase 1 from Bacillus cereus (strain ATCC 10987 / NRS 248).